Consider the following 598-residue polypeptide: Elongation factor 4 (598 aa).

The tr-type G domain maps to K4–E186. GTP is bound by residues D16 to T21 and N133 to D136.

Belongs to the TRAFAC class translation factor GTPase superfamily. Classic translation factor GTPase family. LepA subfamily.

The protein resides in the cell inner membrane. It carries out the reaction GTP + H2O = GDP + phosphate + H(+). Functionally, required for accurate and efficient protein synthesis under certain stress conditions. May act as a fidelity factor of the translation reaction, by catalyzing a one-codon backward translocation of tRNAs on improperly translocated ribosomes. Back-translocation proceeds from a post-translocation (POST) complex to a pre-translocation (PRE) complex, thus giving elongation factor G a second chance to translocate the tRNAs correctly. Binds to ribosomes in a GTP-dependent manner. The polypeptide is Elongation factor 4 (Pseudoalteromonas atlantica (strain T6c / ATCC BAA-1087)).